The chain runs to 195 residues: Dephospho-CoA kinase (195 aa).

The DPCK domain occupies I2–T195. ATP is bound at residue G10 to F15.

This sequence belongs to the CoaE family.

The protein localises to the cytoplasm. It catalyses the reaction 3'-dephospho-CoA + ATP = ADP + CoA + H(+). Its pathway is cofactor biosynthesis; coenzyme A biosynthesis; CoA from (R)-pantothenate: step 5/5. Functionally, catalyzes the phosphorylation of the 3'-hydroxyl group of dephosphocoenzyme A to form coenzyme A. This chain is Dephospho-CoA kinase, found in Wolbachia pipientis wMel.